The following is a 460-amino-acid chain: Ammonium transporter Rh type B-A (460 aa).

Over Met1–Ile10 the chain is Cytoplasmic. Residues Lys11–Val31 form a helical membrane-spanning segment. Topologically, residues Arg32–Tyr62 are extracellular. The N-linked (GlcNAc...) asparagine glycan is linked to Asn48. Residues Pro63–Leu83 form a helical membrane-spanning segment. Over Lys84 to Gly87 the chain is Cytoplasmic. A helical transmembrane segment spans residues Phe88–Ile108. Residues Gln109–Glu125 are Extracellular-facing. Residues Ser126 to Gly146 traverse the membrane as a helical segment. Over Lys147–Pro150 the chain is Cytoplasmic. A helical transmembrane segment spans residues Val151–Ile171. At Leu172–Asp179 the chain is on the extracellular side. The chain crosses the membrane as a helical span at residues Ala180–Tyr202. The Cytoplasmic portion of the chain corresponds to Arg203–Asp220. The helical transmembrane segment at Leu221–Val241 threads the bilayer. At Thr242 to Val252 the chain is on the extracellular side. A helical membrane pass occupies residues Leu253–Leu273. The Cytoplasmic segment spans residues Asn274–His283. The chain crosses the membrane as a helical span at residues Ile284 to Thr304. Position 305 (Pro305) is a topological domain, extracellular. The chain crosses the membrane as a helical span at residues Phe306–Leu326. At Thr327 to Gly347 the chain is on the cytoplasmic side. Residues Met348 to Ile368 form a helical membrane-spanning segment. The Extracellular portion of the chain corresponds to Tyr369–Gln394. A helical membrane pass occupies residues Phe395–Ile415. The Cytoplasmic portion of the chain corresponds to Leu416–Ala460.

The protein belongs to the ammonium transporter (TC 2.A.49) family. Rh subfamily.

Its subcellular location is the basolateral cell membrane. The protein resides in the cytoplasmic vesicle membrane. Its function is as follows. Functions as a specific ammonium transporter. The sequence is that of Ammonium transporter Rh type B-A (rhbg-a) from Xenopus laevis (African clawed frog).